Here is a 400-residue protein sequence, read N- to C-terminus: Integumentary mucin A.1 (400 aa).

The first 20 residues, 1-20, serve as a signal peptide directing secretion; it reads MKHIILCIHFLLMVVGLGQA. P-type domains lie at 21-64 and 72-115; these read QDCS…FYNA and LECS…YART. 3 cysteine pairs are disulfide-bonded: cysteine 23–cysteine 49, cysteine 33–cysteine 48, and cysteine 43–cysteine 60. N-linked (GlcNAc...) asparagine glycosylation occurs at asparagine 63. Cystine bridges form between cysteine 74–cysteine 100, cysteine 84–cysteine 99, and cysteine 94–cysteine 111. 2 stretches are compositionally biased toward low complexity: residues 122-264 and 272-299; these read PDTT…DTTP and ETTT…ETTT. A disordered region spans residues 122-302; sequence PDTTTASTTA…TTTETTTAPP (181 aa). Repeat copies occupy residues 127-135, 136-144, 145-153, 154-162, 163-171, 172-180, 181-189, 190-198, 199-207, 208-216, 217-225, 226-234, 235-243, and 244-252. Positions 127–261 are 15 X 9 AA approximate tandem repeats of [AV]-[SP]-T-T-[AP]-E-T-T-T; that stretch reads ASTTAETTTV…TEPTTTPTTD (135 aa). A 1-15; approximate repeat occupies 253-261; the sequence is EPTTTPTTD. A run of 7 repeats spans residues 272–275, 276–279, 280–283, 284–287, 288–291, 292–295, and 296–299. Positions 272–299 are 7 X 4 AA repeats of E-T-T-T; it reads ETTTETTTETTTETTTETTTETTTETTT. P-type domains are found at residues 298 to 343 and 351 to 394; these read TTAP…FYTE and AECT…FEKA. Disulfide bonds link cysteine 312–cysteine 327, cysteine 322–cysteine 339, cysteine 353–cysteine 379, cysteine 363–cysteine 378, and cysteine 373–cysteine 390.

Extensively O-glycosylated. Consist of about 70% carbohydrate and 30% protein. As to expression, expressed and stored exclusively in mature mucous glands of the skin.

The protein localises to the secreted. In terms of biological role, could be involved in defense against microbial infections. Protects the epithelia from external environment. This is Integumentary mucin A.1 from Xenopus laevis (African clawed frog).